We begin with the raw amino-acid sequence, 78 residues long: Large ribosomal subunit protein bL28 (78 aa).

It belongs to the bacterial ribosomal protein bL28 family.

The polypeptide is Large ribosomal subunit protein bL28 (Prochlorococcus marinus (strain MIT 9303)).